The chain runs to 679 residues: DNA ligase (679 aa).

Residues 32 to 36 (DTLYD), 81 to 82 (SL), and Glu-115 contribute to the NAD(+) site. Residue Lys-117 is the N6-AMP-lysine intermediate of the active site. NAD(+)-binding residues include Arg-138, Glu-175, Lys-293, and Lys-317. Positions 411, 414, 429, and 434 each coordinate Zn(2+). In terms of domain architecture, BRCT spans 601–679 (NSSGALLGKT…EAELQKLLST (79 aa)).

The protein belongs to the NAD-dependent DNA ligase family. LigA subfamily. Mg(2+) is required as a cofactor. Mn(2+) serves as cofactor.

The catalysed reaction is NAD(+) + (deoxyribonucleotide)n-3'-hydroxyl + 5'-phospho-(deoxyribonucleotide)m = (deoxyribonucleotide)n+m + AMP + beta-nicotinamide D-nucleotide.. In terms of biological role, DNA ligase that catalyzes the formation of phosphodiester linkages between 5'-phosphoryl and 3'-hydroxyl groups in double-stranded DNA using NAD as a coenzyme and as the energy source for the reaction. It is essential for DNA replication and repair of damaged DNA. The sequence is that of DNA ligase from Parasynechococcus marenigrum (strain WH8102).